Here is a 183-residue protein sequence, read N- to C-terminus: Holliday junction branch migration complex subunit RuvA (183 aa).

A domain I region spans residues 1 to 63 (MIVGLIGVVE…EDAHLLYGFL (63 aa)). Residues 64–141 (EEGEKILFER…IQDETKPMHN (78 aa)) form a domain II region. Position 141 (asparagine 141) is a region of interest, flexible linker. Residues 141 to 183 (NEVFLALESLGFKSAEINKVLKTLKPSLSIEAAIKEALQQLRS) form a domain III region.

Belongs to the RuvA family. In terms of assembly, homotetramer. Forms an RuvA(8)-RuvB(12)-Holliday junction (HJ) complex. HJ DNA is sandwiched between 2 RuvA tetramers; dsDNA enters through RuvA and exits via RuvB. An RuvB hexamer assembles on each DNA strand where it exits the tetramer. Each RuvB hexamer is contacted by two RuvA subunits (via domain III) on 2 adjacent RuvB subunits; this complex drives branch migration. In the full resolvosome a probable DNA-RuvA(4)-RuvB(12)-RuvC(2) complex forms which resolves the HJ.

The protein resides in the cytoplasm. The RuvA-RuvB-RuvC complex processes Holliday junction (HJ) DNA during genetic recombination and DNA repair, while the RuvA-RuvB complex plays an important role in the rescue of blocked DNA replication forks via replication fork reversal (RFR). RuvA specifically binds to HJ cruciform DNA, conferring on it an open structure. The RuvB hexamer acts as an ATP-dependent pump, pulling dsDNA into and through the RuvAB complex. HJ branch migration allows RuvC to scan DNA until it finds its consensus sequence, where it cleaves and resolves the cruciform DNA. In Helicobacter pylori (strain G27), this protein is Holliday junction branch migration complex subunit RuvA.